Reading from the N-terminus, the 643-residue chain is Transmembrane 9 superfamily member 4 (643 aa).

An N-terminal signal peptide occupies residues M1–T23. Residues F24–F282 lie on the Extracellular side of the membrane. The chain crosses the membrane as a helical span at residues S283–I303. Over R304 to S347 the chain is Cytoplasmic. Y313 carries the phosphotyrosine modification. Residues L348–L368 traverse the membrane as a helical segment. The Extracellular portion of the chain corresponds to G369 to G377. The helical transmembrane segment at A378 to A398 threads the bilayer. Residues G399 to T417 are Cytoplasmic-facing. Residues A418–G438 form a helical membrane-spanning segment. The Extracellular segment spans residues K439 to M450. Residues V451–F471 traverse the membrane as a helical segment. At G472 to V502 the chain is on the cytoplasmic side. A helical membrane pass occupies residues G503–F523. The Extracellular segment spans residues S524 to G536. A helical transmembrane segment spans residues F537 to V557. Topologically, residues Y558 to R571 are cytoplasmic. The chain crosses the membrane as a helical span at residues N572 to V592. At N593–E599 the chain is on the extracellular side. A helical transmembrane segment spans residues F600–L620. At T621–D643 the chain is on the cytoplasmic side.

This sequence belongs to the nonaspanin (TM9SF) (TC 9.A.2) family.

It is found in the membrane. The protein resides in the golgi apparatus. Its subcellular location is the early endosome. In terms of biological role, associates with proteins harboring glycine-rich transmembrane domains and ensures their efficient localization to the cell surface. This is Transmembrane 9 superfamily member 4 (Tm9sf4) from Mus musculus (Mouse).